Reading from the N-terminus, the 1453-residue chain is NK-tumor recognition protein (1453 aa).

One can recognise a PPIase cyclophilin-type domain in the interval 10–175 (HFDIEINREP…ADVRVIDCGV (166 aa)). The disordered stretch occupies residues 187–625 (KKRKKPTCSE…RWKPGQKPWK (439 aa)). Residues 195-213 (SEGSDSSSRSSSSSESSSE) are compositionally biased toward low complexity. Positions 221 to 240 (IRRRRHKRRPKVRHAKKRRK) are enriched in basic residues. Basic and acidic residues predominate over residues 259 to 286 (YSERSDVNEKRSVDSNTKREKPVVRPEE). Residue Lys323 forms a Glycyl lysine isopeptide (Lys-Gly) (interchain with G-Cter in SUMO2) linkage. The segment covering 329–348 (SGRKIKGRGTIRYHTPPRSR) has biased composition (basic residues). 3 positions are modified to phosphoserine: Ser379, Ser401, and Ser416. Positions 382 to 402 (KWSKGDKLSDPCSSRWDERSL) are enriched in basic and acidic residues. Residues 403–421 (SQRSRSWSYNGYYSDLSTA) show a composition bias toward polar residues. Basic residues predominate over residues 425-460 (DGHHKKHRKEKKFKHKKKAKKQKHCRRHRQTKKRRI). Residues 514–531 (SSRDSYRSKSHSRSDSRG) are compositionally biased toward basic and acidic residues. Low complexity-rich tracts occupy residues 532–546 (SSRSRAVSKSSSRSL) and 554–565 (SSRSGPRRTSIS). Glycyl lysine isopeptide (Lys-Gly) (interchain with G-Cter in SUMO2) cross-links involve residues Lys576 and Lys579. Ser611 is modified (phosphoserine). Lys637 is covalently cross-linked (Glycyl lysine isopeptide (Lys-Gly) (interchain with G-Cter in SUMO2)). Ser646 bears the Phosphoserine mark. Over residues 651-661 (TNIKATVSSSS) the composition is skewed to polar residues. The interval 651 to 1453 (TNIKATVSSS…RSPSESSRYS (803 aa)) is disordered. Glycyl lysine isopeptide (Lys-Gly) (interchain with G-Cter in SUMO2) cross-links involve residues Lys654 and Lys664. Composition is skewed to low complexity over residues 682–726 (RSSG…SSRS) and 736–749 (SQHSRSSSYTSVSS). Residues 755 to 772 (AMFRSNRKKSVTSHKRHR) are compositionally biased toward basic residues. Residues 773 to 789 (SNSEKTLHSKYVRGREK) are compositionally biased toward basic and acidic residues. Positions 799–809 (SRSSLDYSSDS) are enriched in low complexity. Basic and acidic residues-rich tracts occupy residues 820-852 (PEKEKQGKVEALNDKQGKGREEGKPKPEWECPR) and 859-868 (KDHSRDDSVS). A phosphoserine mark is found at Ser880, Ser882, Ser884, and Ser900. Basic and acidic residues predominate over residues 887-902 (DVTKSRKSDPRRGSEK). The segment covering 903–913 (EEGEASSDSES) has biased composition (acidic residues). Over residues 948–958 (SSASESESSCS) the composition is skewed to low complexity. The segment covering 966–982 (EPQKQKHSKDDLKGDHT) has biased composition (basic and acidic residues). A compositionally biased stretch (basic residues) spans 983-1005 (KRAREKSKAKKDKKHKAPKRKQA). The span at 1030–1045 (DPKEKRHVSEKCEAVK) shows a compositional bias: basic and acidic residues. Ser1139 and Ser1148 each carry phosphoserine. The segment covering 1170–1180 (QESSMSESKTL) has biased composition (polar residues). The segment covering 1189 to 1199 (SSTSVTSPVET) has biased composition (low complexity). The residue at position 1195 (Ser1195) is a Phosphoserine. Glycyl lysine isopeptide (Lys-Gly) (interchain with G-Cter in SUMO2) cross-links involve residues Lys1208 and Lys1249. The interval 1303-1453 (RSPHRSRSKS…RSPSESSRYS (151 aa)) is arg/Ser tandem repeat-rich. The segment covering 1322–1346 (SVSYSHSRSRSRSSTSSYRSRSYSR) has biased composition (low complexity). Residues 1369 to 1379 (HSHRTSSRSRS) are compositionally biased toward basic residues. The segment covering 1380-1401 (RSSSYDLHSRSRSYTYDSYYSR) has biased composition (low complexity). Positions 1416–1426 (RGRSYNRRSRS) are enriched in basic residues.

The protein localises to the cell membrane. It catalyses the reaction [protein]-peptidylproline (omega=180) = [protein]-peptidylproline (omega=0). With respect to regulation, inhibited by cyclosporin A (CsA). PPIase that catalyzes the cis-trans isomerization of proline imidic peptide bonds in oligopeptides and may therefore assist protein folding. Component of a putative tumor-recognition complex involved in the function of NK cells. This Mus musculus (Mouse) protein is NK-tumor recognition protein.